Reading from the N-terminus, the 359-residue chain is Patr class I histocompatibility antigen, B-1 alpha chain (359 aa).

The first 20 residues, Ala-1–Ala-20, serve as a signal peptide directing secretion. An alpha-1 region spans residues Gly-21–Ala-110. Residues Gly-21–Val-305 lie on the Extracellular side of the membrane. A glycan (N-linked (GlcNAc...) asparagine) is linked at Asn-106. The segment at Gly-111–Ala-202 is alpha-2. 2 disulfides stabilise this stretch: Cys-121/Cys-184 and Cys-223/Cys-279. Residues Asp-203–Trp-294 are alpha-3. Positions Pro-205–Thr-291 constitute an Ig-like C1-type domain. The interval Glu-295–Val-305 is connecting peptide. The helical transmembrane segment at Gly-306 to Cys-329 threads the bilayer. Topologically, residues Arg-330–Ala-359 are cytoplasmic. Residues Lys-332 to Ala-359 are disordered. A compositionally biased stretch (low complexity) spans Ser-340–Ala-359. Phosphoserine occurs at positions 353 and 356.

Belongs to the MHC class I family. Heterodimer of an alpha chain and a beta chain (beta-2-microglobulin).

Its subcellular location is the membrane. Functionally, involved in the presentation of foreign antigens to the immune system. The protein is Patr class I histocompatibility antigen, B-1 alpha chain of Pan troglodytes (Chimpanzee).